We begin with the raw amino-acid sequence, 141 residues long: Large ribosomal subunit protein uL16 (141 aa).

The segment at Met-1–Arg-23 is disordered.

Belongs to the universal ribosomal protein uL16 family. As to quaternary structure, part of the 50S ribosomal subunit.

Binds 23S rRNA and is also seen to make contacts with the A and possibly P site tRNAs. The polypeptide is Large ribosomal subunit protein uL16 (Sulfurovum sp. (strain NBC37-1)).